Consider the following 482-residue polypeptide: Ribosomal protein S6 kinase beta-2 (482 aa).

A disordered region spans residues 1–26; that stretch reads MAAVFDLDLETEEGSEGEGEPELSPA. Residues 7-21 show a composition bias toward acidic residues; sequence LDLETEEGSEGEGEP. The residue at position 15 (Ser15) is a Phosphoserine. In terms of domain architecture, Protein kinase spans 67 to 328; that stretch reads FELLRVLGKG…AADVQRHPFF (262 aa). ATP is bound by residues 73 to 81 and Lys99; that span reads LGKGGYGKV. Residue Asp194 is the Proton acceptor of the active site. The 71-residue stretch at 329 to 399 folds into the AGC-kinase C-terminal domain; that stretch reads RHMNWDDLLA…VAPSVLDSIK (71 aa). The disordered stretch occupies residues 407–482; the sequence is KLRSPRRLNS…SKRGRGRPGR (76 aa). Ser417 and Ser423 each carry phosphoserine. Pro residues predominate over residues 437–466; it reads PSLPEPTELPLPPLLPPPPPSTTAPLPIRP. The Nuclear localization signal motif lies at 471–477; that stretch reads KKSKRGR. Over residues 471–482 the composition is skewed to basic residues; the sequence is KKSKRGRGRPGR. Phosphoserine; by PKC is present on Ser473.

Belongs to the protein kinase superfamily. AGC Ser/Thr protein kinase family. S6 kinase subfamily. Post-translationally, phosphorylated and activated by MTOR. Phosphorylation by PKC within the NLS in response to mitogenic stimuli causes cytoplasmic retention.

The protein localises to the cytoplasm. It is found in the nucleus. It catalyses the reaction L-seryl-[protein] + ATP = O-phospho-L-seryl-[protein] + ADP + H(+). The enzyme catalyses L-threonyl-[protein] + ATP = O-phospho-L-threonyl-[protein] + ADP + H(+). Phosphorylates specifically ribosomal protein S6. Seems to act downstream of mTOR signaling in response to growth factors and nutrients to promote cell proliferation, cell growth and cell cycle progression in an alternative pathway regulated by MEAK7. In Homo sapiens (Human), this protein is Ribosomal protein S6 kinase beta-2 (RPS6KB2).